Reading from the N-terminus, the 491-residue chain is 3-octaprenyl-4-hydroxybenzoate carboxy-lyase (491 aa).

Asn172 is a Mn(2+) binding site. Residues 175–177, 189–191, and 194–195 contribute to the prenylated FMN site; these read IYR, RWL, and RG. A Mn(2+)-binding site is contributed by Glu238. Residue Asp287 is the Proton donor of the active site.

Belongs to the UbiD family. As to quaternary structure, homohexamer. Requires prenylated FMN as cofactor. It depends on Mn(2+) as a cofactor.

The protein resides in the cell membrane. The catalysed reaction is a 4-hydroxy-3-(all-trans-polyprenyl)benzoate + H(+) = a 2-(all-trans-polyprenyl)phenol + CO2. The protein operates within cofactor biosynthesis; ubiquinone biosynthesis. Functionally, catalyzes the decarboxylation of 3-octaprenyl-4-hydroxy benzoate to 2-octaprenylphenol, an intermediate step in ubiquinone biosynthesis. The chain is 3-octaprenyl-4-hydroxybenzoate carboxy-lyase from Alcanivorax borkumensis (strain ATCC 700651 / DSM 11573 / NCIMB 13689 / SK2).